A 172-amino-acid chain; its full sequence is Melanocortin-2 receptor accessory protein (172 aa).

Residues 38–58 (IVIAFWVSLAAFVVLLFLILL) traverse the membrane as a helical segment. Disordered stretches follow at residues 105–130 (QAQA…SSST) and 152–172 (PLVR…QLQS).

Belongs to the MRAP family. In terms of assembly, homodimer and heterodimer. Forms antiparallel homodimers and heterodimers with MRAP2. Interacts with MC1R, MC2R, MC3R, MC4R and MC5R.

Its subcellular location is the cell membrane. The protein resides in the endoplasmic reticulum membrane. Its function is as follows. Modulator of melanocortin receptors (MC1R, MC2R, MC3R, MC4R and MC5R). Acts by increasing ligand-sensitivity of melanocortin receptors and enhancing generation of cAMP by the receptors. Required both for MC2R trafficking to the cell surface of adrenal cells and for signaling in response to corticotropin (ACTH). May be involved in the intracellular trafficking pathways in adipocyte cells. The sequence is that of Melanocortin-2 receptor accessory protein (MRAP) from Pan troglodytes (Chimpanzee).